Consider the following 284-residue polypeptide: Gigasin-3a (284 aa).

The tract at residues 202 to 284 (GLDNPLPNPR…FKAGRKNNRN (83 aa)) is disordered. Positions 223–245 (SSPLPESTPKSSTKTSSASPIKS) are enriched in low complexity. Residues 246-257 (RQGKKLRGKKQN) are compositionally biased toward basic residues. Over residues 258-267 (KTGNTRFTYR) the composition is skewed to polar residues. Over residues 268 to 284 (NNKRNIKFKAGRKNNRN) the composition is skewed to basic residues.

Component of the organic matrix of calcified shell layers.

This Magallana gigas (Pacific oyster) protein is Gigasin-3a.